The primary structure comprises 248 residues: Trypsin I-P1 (248 aa).

An N-terminal signal peptide occupies residues 1 to 15 (MKFLVLVAFVGVTVA). Positions 16–25 (FPISDEDDDK) are cleaved as a propeptide — activation peptide. The Peptidase S1 domain maps to 26-246 (IVGGYSCARS…YVSWIKTTMS (221 aa)). 6 cysteine pairs are disulfide-bonded: cysteine 32/cysteine 162, cysteine 50/cysteine 66, cysteine 134/cysteine 235, cysteine 141/cysteine 208, cysteine 173/cysteine 187, and cysteine 198/cysteine 222. The Charge relay system role is filled by histidine 65. Residues glutamate 77, asparagine 79, and glutamate 87 each contribute to the Ca(2+) site. The active-site Charge relay system is the aspartate 109. The active-site Charge relay system is the serine 202.

Belongs to the peptidase S1 family. Requires Ca(2+) as cofactor. High levels are seen in the pancreas while lower levels are found in the liver, spleen and thymus.

Its subcellular location is the secreted. The protein localises to the extracellular space. It carries out the reaction Preferential cleavage: Arg-|-Xaa, Lys-|-Xaa.. The protein is Trypsin I-P1 of Gallus gallus (Chicken).